The following is a 238-amino-acid chain: Ribosomal RNA small subunit methyltransferase G (238 aa).

Residues glycine 106, leucine 111, 157 to 158, and arginine 170 each bind S-adenosyl-L-methionine; that span reads IE.

Belongs to the methyltransferase superfamily. RNA methyltransferase RsmG family.

It is found in the cytoplasm. The enzyme catalyses guanosine(527) in 16S rRNA + S-adenosyl-L-methionine = N(7)-methylguanosine(527) in 16S rRNA + S-adenosyl-L-homocysteine. Specifically methylates the N7 position of guanine in position 527 of 16S rRNA. This is Ribosomal RNA small subunit methyltransferase G from Psychrobacter arcticus (strain DSM 17307 / VKM B-2377 / 273-4).